Consider the following 582-residue polypeptide: Enhancer of polycomb-like protein 1 (582 aa).

Positions Arg-238–Asn-295 form a coiled coil. The interval Pro-323–Gly-351 is disordered. Positions Thr-352 to Lys-385 form a coiled coil. Low complexity predominate over residues Ala-539–Gln-555. The segment at Ala-539–Ser-582 is disordered.

This sequence belongs to the enhancer of polycomb family. In terms of assembly, component of the NuA4 histone acetyltransferase complex.

It localises to the nucleus. Functionally, component of the NuA4 histone acetyltransferase complex which is involved in transcriptional activation of selected genes principally by acetylation of nucleosomal histone H4 and H2A. The NuA4 complex is also involved in DNA repair. Involved in gene silencing by neighboring heterochromatin, blockage of the silencing spreading along the chromosome, and required for cell cycle progression through G2/M. This chain is Enhancer of polycomb-like protein 1 (epl1), found in Aspergillus fumigatus (strain ATCC MYA-4609 / CBS 101355 / FGSC A1100 / Af293) (Neosartorya fumigata).